The primary structure comprises 375 residues: Alcohol dehydrogenase 1 (375 aa).

Ser-2 carries the N-acetylserine modification. Residues Cys-47, His-68, Cys-98, Cys-101, Cys-104, Cys-112, and Cys-175 each coordinate Zn(2+). Residues 200–205, Asp-224, and Lys-229 contribute to the NAD(+) site; that span reads WSGRVG. At Lys-234 the chain carries N6-succinyllysine. 293–295 is an NAD(+) binding site; sequence VGV. Lys-340 is modified (N6-succinyllysine). NAD(+) is bound at residue Arg-370.

The protein belongs to the zinc-containing alcohol dehydrogenase family. Class-I subfamily. Homodimer. The cofactor is Zn(2+).

It localises to the cytoplasm. It catalyses the reaction a primary alcohol + NAD(+) = an aldehyde + NADH + H(+). The enzyme catalyses a secondary alcohol + NAD(+) = a ketone + NADH + H(+). This chain is Alcohol dehydrogenase 1 (ADH1), found in Geomys bursarius (Plains pocket gopher).